Reading from the N-terminus, the 214-residue chain is Putative pit accessory protein (214 aa).

It belongs to the UPF0111 family.

Its function is as follows. Could be involved in orthophosphate transport. This is Putative pit accessory protein from Rhizobium meliloti (strain 1021) (Ensifer meliloti).